Here is a 398-residue protein sequence, read N- to C-terminus: Carbamoyl phosphate synthase small chain (398 aa).

Positions methionine 1 to lysine 204 are CPSase. Residues serine 53, glycine 256, and glycine 258 each coordinate L-glutamine. Residues lysine 208–lysine 395 form the Glutamine amidotransferase type-1 domain. Cysteine 284 functions as the Nucleophile in the catalytic mechanism. Residues leucine 285, glutamine 288, asparagine 326, glycine 328, and phenylalanine 329 each contribute to the L-glutamine site. Catalysis depends on residues histidine 368 and glutamate 370.

The protein belongs to the CarA family. In terms of assembly, composed of two chains; the small (or glutamine) chain promotes the hydrolysis of glutamine to ammonia, which is used by the large (or ammonia) chain to synthesize carbamoyl phosphate. Tetramer of heterodimers (alpha,beta)4.

The catalysed reaction is hydrogencarbonate + L-glutamine + 2 ATP + H2O = carbamoyl phosphate + L-glutamate + 2 ADP + phosphate + 2 H(+). It catalyses the reaction L-glutamine + H2O = L-glutamate + NH4(+). It participates in amino-acid biosynthesis; L-arginine biosynthesis; carbamoyl phosphate from bicarbonate: step 1/1. Its pathway is pyrimidine metabolism; UMP biosynthesis via de novo pathway; (S)-dihydroorotate from bicarbonate: step 1/3. Functionally, small subunit of the glutamine-dependent carbamoyl phosphate synthetase (CPSase). CPSase catalyzes the formation of carbamoyl phosphate from the ammonia moiety of glutamine, carbonate, and phosphate donated by ATP, constituting the first step of 2 biosynthetic pathways, one leading to arginine and/or urea and the other to pyrimidine nucleotides. The small subunit (glutamine amidotransferase) binds and cleaves glutamine to supply the large subunit with the substrate ammonia. The chain is Carbamoyl phosphate synthase small chain from Polynucleobacter necessarius subsp. necessarius (strain STIR1).